We begin with the raw amino-acid sequence, 450 residues long: UDP-N-acetylmuramoylalanine--D-glutamate ligase (450 aa).

Position 115–121 (115–121) interacts with ATP; it reads GTNGKTT.

Belongs to the MurCDEF family.

The protein localises to the cytoplasm. The enzyme catalyses UDP-N-acetyl-alpha-D-muramoyl-L-alanine + D-glutamate + ATP = UDP-N-acetyl-alpha-D-muramoyl-L-alanyl-D-glutamate + ADP + phosphate + H(+). It functions in the pathway cell wall biogenesis; peptidoglycan biosynthesis. In terms of biological role, cell wall formation. Catalyzes the addition of glutamate to the nucleotide precursor UDP-N-acetylmuramoyl-L-alanine (UMA). The protein is UDP-N-acetylmuramoylalanine--D-glutamate ligase of Desulfatibacillum aliphaticivorans.